Consider the following 300-residue polypeptide: Acetylglutamate kinase (300 aa).

Substrate is bound by residues 73–74 (GG), R95, and N197.

Belongs to the acetylglutamate kinase family. ArgB subfamily.

The protein resides in the cytoplasm. It catalyses the reaction N-acetyl-L-glutamate + ATP = N-acetyl-L-glutamyl 5-phosphate + ADP. It participates in amino-acid biosynthesis; L-arginine biosynthesis; N(2)-acetyl-L-ornithine from L-glutamate: step 2/4. Catalyzes the ATP-dependent phosphorylation of N-acetyl-L-glutamate. In Bordetella bronchiseptica (strain ATCC BAA-588 / NCTC 13252 / RB50) (Alcaligenes bronchisepticus), this protein is Acetylglutamate kinase.